Here is a 265-residue protein sequence, read N- to C-terminus: Glutamate racemase (265 aa).

Substrate contacts are provided by residues 9–10 (DS) and 41–42 (YG). C72 functions as the Proton donor/acceptor in the catalytic mechanism. Residue 73-74 (NT) participates in substrate binding. Residue C183 is the Proton donor/acceptor of the active site. Residue 184–185 (TH) coordinates substrate.

It belongs to the aspartate/glutamate racemases family.

The enzyme catalyses L-glutamate = D-glutamate. Its pathway is cell wall biogenesis; peptidoglycan biosynthesis. Provides the (R)-glutamate required for cell wall biosynthesis. This Lysinibacillus sphaericus (strain C3-41) protein is Glutamate racemase.